A 367-amino-acid chain; its full sequence is Phosphoribosylaminoimidazole-succinocarboxamide synthase (367 aa).

The protein belongs to the SAICAR synthetase family.

It catalyses the reaction 5-amino-1-(5-phospho-D-ribosyl)imidazole-4-carboxylate + L-aspartate + ATP = (2S)-2-[5-amino-1-(5-phospho-beta-D-ribosyl)imidazole-4-carboxamido]succinate + ADP + phosphate + 2 H(+). The protein operates within purine metabolism; IMP biosynthesis via de novo pathway; 5-amino-1-(5-phospho-D-ribosyl)imidazole-4-carboxamide from 5-amino-1-(5-phospho-D-ribosyl)imidazole-4-carboxylate: step 1/2. In Shewanella baltica (strain OS195), this protein is Phosphoribosylaminoimidazole-succinocarboxamide synthase.